The primary structure comprises 255 residues: Putative SET domain-containing protein L678 (255 aa).

The SET domain occupies 5–176; that stretch reads NRISEVFIKK…TGEELTDNYV (172 aa). The tract at residues 235-255 is disordered; the sequence is LQQNSKNLKKNPKKTIKATPK.

The protein belongs to the class V-like SAM-binding methyltransferase superfamily.

The protein is Putative SET domain-containing protein L678 of Acanthamoeba polyphaga mimivirus (APMV).